The following is a 368-amino-acid chain: GDSL esterase/lipase At4g16230 (368 aa).

The first 24 residues, 1–24 (MSLLVFLCQIIVLSVLFFSEVCLA), serve as a signal peptide directing secretion. Residue Ser-37 is the Nucleophile of the active site. Residues Asn-117 and Asn-286 are each glycosylated (N-linked (GlcNAc...) asparagine). Catalysis depends on residues Asp-329 and His-332.

The protein belongs to the 'GDSL' lipolytic enzyme family.

The protein localises to the secreted. The protein is GDSL esterase/lipase At4g16230 of Arabidopsis thaliana (Mouse-ear cress).